Here is a 474-residue protein sequence, read N- to C-terminus: Glutathione synthetase (474 aa).

A2 bears the N-acetylalanine mark. Position 125 (R125) interacts with substrate. E144 lines the ATP pocket. Positions 144 and 146 each coordinate Mg(2+). Substrate contacts are provided by residues 148 to 151 (ISAS), 214 to 216 (ERN), Q220, and 267 to 270 (RDGY). ATP-binding positions include K305, 364 to 373 (KPQREGGGNN), Y375, and 398 to 401 (MEKI). E368 provides a ligand contact to Mg(2+). S415 bears the Phosphoserine mark. E425 contributes to the ATP binding site. Substrate is bound at residue R450. The ATP site is built by K452 and D458. 461 to 462 (VA) is a binding site for substrate.

This sequence belongs to the eukaryotic GSH synthase family. In terms of assembly, homodimer. It depends on Mg(2+) as a cofactor.

The enzyme catalyses gamma-L-glutamyl-L-cysteine + glycine + ATP = glutathione + ADP + phosphate + H(+). The catalysed reaction is gamma-L-glutamyl-(2S)-2-aminobutanoate + glycine + ATP = ophthalmate + ADP + phosphate + H(+). Its pathway is sulfur metabolism; glutathione biosynthesis; glutathione from L-cysteine and L-glutamate: step 2/2. Catalyzes the production of glutathione from gamma-glutamylcysteine and glycine in an ATP-dependent manner. Glutathione (gamma-glutamylcysteinylglycine, GSH) is the most abundant intracellular thiol in living aerobic cells and is required for numerous processes including the protection of cells against oxidative damage, amino acid transport, the detoxification of foreign compounds, the maintenance of protein sulfhydryl groups in a reduced state and acts as a cofactor for a number of enzymes. Participates in ophthalmate biosynthesis in hepatocytes. The chain is Glutathione synthetase from Homo sapiens (Human).